Reading from the N-terminus, the 410-residue chain is Segmentation protein fushi tarazu (410 aa).

Disordered stretches follow at residues 71–93 (TQTVPPVQPTTPPPKATKRKAED), 138–157 (PAVSTKVTASPAPSYDQEYV), and 175–221 (SPQS…SAVS). Over residues 76-85 (PVQPTTPPPK) the composition is skewed to pro residues. Residues 190–199 (TPPPTTPTSL) show a composition bias toward pro residues. Residues 254–313 (SKRTRQTYTRYQTLELEKEFHFNRYITRRRRIDIANALSLSERQIKIWFQNRRMKSKKDR) constitute a DNA-binding region (homeobox).

Belongs to the Antp homeobox family. Phosphorylated at as many as 16 sites. Expressed early in development in a striped pattern at the blastoderm stage. Later expressed in a specific subset of neuronal precursor cells, neurons and glia in the developing CNS. Between 5 and 6 hours of development, found in the midline precursor-2 cells in a segmentally repeating pattern. Expression in many other neuronal precursors follows and reaches a second peak of abundance at 9 hours of development. Expressed in the hindgut between 11-15 hours of development.

The protein localises to the nucleus. May play a role in determining neuronal identity, may be directly involved in specifying identity of individual neurons. Required during embryogenesis for the process of body segmentation. Homeotic protein, required in alternating segment primordia, it specifies the correct number of segments. This is Segmentation protein fushi tarazu (ftz) from Drosophila melanogaster (Fruit fly).